Here is a 211-residue protein sequence, read N- to C-terminus: Putative truncated flagellar export/assembly protein LafU (211 aa).

The OmpA-like domain maps to 58 to 176 (LRVLIKDDQN…RIEIMVLTKS (119 aa)).

This sequence belongs to the MotB family.

This chain is Putative truncated flagellar export/assembly protein LafU, found in Escherichia coli (strain K12).